Reading from the N-terminus, the 336-residue chain is HTH-type transcriptional regulator CdhR (336 aa).

The HTH araC/xylS-type domain occupies 213–311; sequence VQVIGEMERH…AASPSQDRAV (99 aa). 2 consecutive DNA-binding regions (H-T-H motif) follow at residues 230–251 and 278–301; these read LELA…RVHL and VLQV…RARF. The interval 305–336 is disordered; sequence PSQDRAVLPLKAPAATPPGAPAGHRTPRAERG.

Functionally, induces the transcription of the PA5384-PA5388 operon in response to carnitine. This operon is involved in the degradation of L-carnitine, and allows P.aeruginosa to grow on L-carnitine as the sole source of carbon and nitrogen. This chain is HTH-type transcriptional regulator CdhR (cdhR), found in Pseudomonas aeruginosa (strain ATCC 15692 / DSM 22644 / CIP 104116 / JCM 14847 / LMG 12228 / 1C / PRS 101 / PAO1).